The following is a 368-amino-acid chain: tRNA-specific 2-thiouridylase MnmA (368 aa).

ATP-binding positions include 11-18 (GMSGGVDS) and Met37. The interval 97–99 (NPD) is interaction with target base in tRNA. Cys102 (nucleophile) is an active-site residue. Cys102 and Cys199 are oxidised to a cystine. Gly127 provides a ligand contact to ATP. The tract at residues 149–151 (KDQ) is interaction with tRNA. The active-site Cysteine persulfide intermediate is Cys199. An interaction with tRNA region spans residues 311 to 312 (RY).

Belongs to the MnmA/TRMU family. Interacts with TusE.

The protein localises to the cytoplasm. The enzyme catalyses S-sulfanyl-L-cysteinyl-[protein] + uridine(34) in tRNA + AH2 + ATP = 2-thiouridine(34) in tRNA + L-cysteinyl-[protein] + A + AMP + diphosphate + H(+). Catalyzes the 2-thiolation of uridine at the wobble position (U34) of tRNA(Lys), tRNA(Glu) and tRNA(Gln), leading to the formation of s(2)U34, the first step of tRNA-mnm(5)s(2)U34 synthesis. Sulfur is provided by IscS, via a sulfur-relay system. Binds ATP and its substrate tRNAs. This chain is tRNA-specific 2-thiouridylase MnmA, found in Shigella boydii serotype 18 (strain CDC 3083-94 / BS512).